Consider the following 697-residue polypeptide: Serotransferrin (697 aa).

A signal peptide spans 1–19; it reads MRLTVGALLACAALGLCLA. Transferrin-like domains follow at residues 25–347 and 360–682; these read VKWC…NQQE and VKWC…NMRK. 2 disulfide bridges follow: C28–C67 and C38–C58. R42 carries the dimethylated arginine modification. Fe(3+) contacts are provided by D82 and Y114. 8 disulfides stabilise this stretch: C137/C213, C156/C350, C177/C193, C180/C196, C190/C198, C246/C260, C363/C395, and C373/C386. Residues T139, R143, A145, and G146 each contribute to the hydrogencarbonate site. Position 207 (Y207) interacts with Fe(3+). Position 268 (H268) interacts with Fe(3+). Phosphoserine is present on S388. The Fe(3+) site is built by D410 and Y448. Intrachain disulfides connect C420–C692, C435–C655, C472–C543, C496–C683, C506–C520, C517–C526, C583–C597, and C633–C638. 4 residues coordinate hydrogencarbonate: T474, R478, A480, and G481. N513 carries an N-linked (GlcNAc...) asparagine glycan. Residue Y537 participates in Fe(3+) binding. H605 lines the Fe(3+) pocket. A Phosphoserine modification is found at S684.

The protein belongs to the transferrin family. In terms of assembly, monomer. Part of a complex composed of SLC40A1/ferroportin, TF/transferrin and HEPH/hephaestin that transfers iron from cells to transferrin. In terms of tissue distribution, expressed by the liver and secreted in plasma.

Its subcellular location is the secreted. Transferrins are iron binding transport proteins which can bind two Fe(3+) ions in association with the binding of an anion, usually bicarbonate. It is responsible for the transport of iron from sites of absorption and heme degradation to those of storage and utilization. Serum transferrin may also have a further role in stimulating cell proliferation. The sequence is that of Serotransferrin (Tf) from Mus musculus (Mouse).